A 427-amino-acid polypeptide reads, in one-letter code: Glutamate-1-semialdehyde 2,1-aminomutase (427 aa).

Residue K265 is modified to N6-(pyridoxal phosphate)lysine.

It belongs to the class-III pyridoxal-phosphate-dependent aminotransferase family. HemL subfamily. Homodimer. Requires pyridoxal 5'-phosphate as cofactor.

The protein resides in the cytoplasm. It carries out the reaction (S)-4-amino-5-oxopentanoate = 5-aminolevulinate. The protein operates within porphyrin-containing compound metabolism; protoporphyrin-IX biosynthesis; 5-aminolevulinate from L-glutamyl-tRNA(Glu): step 2/2. This chain is Glutamate-1-semialdehyde 2,1-aminomutase, found in Bordetella parapertussis (strain 12822 / ATCC BAA-587 / NCTC 13253).